Reading from the N-terminus, the 295-residue chain is Deoxyuridine 5'-triphosphate nucleotidohydrolase (295 aa).

178-180 (RSG) is a substrate binding site. Residues 260–272 (NSVRKHTHEDNPV) are compositionally biased toward basic and acidic residues. The interval 260–295 (NSVRKHTHEDNPVHEPNVATASADIRGTKGLGSSGF) is disordered.

The protein belongs to the dUTPase family. It depends on Mg(2+) as a cofactor.

It catalyses the reaction dUTP + H2O = dUMP + diphosphate + H(+). Functionally, involved in nucleotide metabolism: produces dUMP, the immediate precursor of thymidine nucleotides and decreases the intracellular concentration of dUTP to avoid uracil incorporation into viral DNA. The polypeptide is Deoxyuridine 5'-triphosphate nucleotidohydrolase (Human herpesvirus 8 type P (isolate GK18) (HHV-8)).